Consider the following 359-residue polypeptide: MRNRFGSLFSLTTWGESHGPSIGVVIDGCPAGLLLDPEDFIPAMSRRSPGRPGTSPRKEADIVHILSGVYQGKTTGTPISLQIFNTDVKSATYHQQEDRYRPGHGQLAYEKKYGLVDPLGGGRSSARETACRVAAGVIAAKILAHYDIYCLAFLSKLGKESIETYPKLSKEFAQNIYNSPFLSPLDNDSILQTLTHLQNEQDSLGGVVSFITSPIHESLGEPVFNKVQAVLASGLMSIPAAKGFEIGLGFASTDSYGSEYIDPFIIENENISMGSNNCGGSLGGITVGMPLNGRVAFKPTSSIRKPFLTVTKTGEPSIYATQKEGRHDPCVAIRAVAVVEAMVNLVLADLLLQQRCARL.

Arg47 provides a ligand contact to NADP(+). Residues 123-125, Gly283, 298-302, and Arg326 each bind FMN; these read RSS and KPTSS.

It belongs to the chorismate synthase family. Homotetramer. FMNH2 is required as a cofactor.

The enzyme catalyses 5-O-(1-carboxyvinyl)-3-phosphoshikimate = chorismate + phosphate. It functions in the pathway metabolic intermediate biosynthesis; chorismate biosynthesis; chorismate from D-erythrose 4-phosphate and phosphoenolpyruvate: step 7/7. Catalyzes the anti-1,4-elimination of the C-3 phosphate and the C-6 proR hydrogen from 5-enolpyruvylshikimate-3-phosphate (EPSP) to yield chorismate, which is the branch point compound that serves as the starting substrate for the three terminal pathways of aromatic amino acid biosynthesis. This reaction introduces a second double bond into the aromatic ring system. The polypeptide is Chorismate synthase (Chlamydia caviae (strain ATCC VR-813 / DSM 19441 / 03DC25 / GPIC) (Chlamydophila caviae)).